Consider the following 159-residue polypeptide: Flagellar assembly factor FliW (159 aa).

It belongs to the FliW family. As to quaternary structure, interacts with translational regulator CsrA and flagellin(s).

The protein resides in the cytoplasm. Its function is as follows. Acts as an anti-CsrA protein, binds CsrA and prevents it from repressing translation of its target genes, one of which is flagellin. Binds to flagellin and participates in the assembly of the flagellum. In Geobacter sulfurreducens (strain ATCC 51573 / DSM 12127 / PCA), this protein is Flagellar assembly factor FliW.